We begin with the raw amino-acid sequence, 393 residues long: CCA-adding enzyme (393 aa).

ATP contacts are provided by Gly-27 and Arg-30. CTP-binding residues include Gly-27 and Arg-30. Mg(2+) is bound by residues Asp-40 and Asp-42. Arg-111, Asp-154, Arg-157, Arg-160, and Arg-163 together coordinate ATP. Residues Arg-111, Asp-154, Arg-157, Arg-160, and Arg-163 each coordinate CTP.

It belongs to the tRNA nucleotidyltransferase/poly(A) polymerase family. Bacterial CCA-adding enzyme type 3 subfamily. Homodimer. It depends on Mg(2+) as a cofactor.

The catalysed reaction is a tRNA precursor + 2 CTP + ATP = a tRNA with a 3' CCA end + 3 diphosphate. The enzyme catalyses a tRNA with a 3' CCA end + 2 CTP + ATP = a tRNA with a 3' CCACCA end + 3 diphosphate. Its function is as follows. Catalyzes the addition and repair of the essential 3'-terminal CCA sequence in tRNAs without using a nucleic acid template. Adds these three nucleotides in the order of C, C, and A to the tRNA nucleotide-73, using CTP and ATP as substrates and producing inorganic pyrophosphate. tRNA 3'-terminal CCA addition is required both for tRNA processing and repair. Also involved in tRNA surveillance by mediating tandem CCA addition to generate a CCACCA at the 3' terminus of unstable tRNAs. While stable tRNAs receive only 3'-terminal CCA, unstable tRNAs are marked with CCACCA and rapidly degraded. The protein is CCA-adding enzyme of Listeria monocytogenes serotype 4b (strain F2365).